The primary structure comprises 193 residues: dCTP deaminase (193 aa).

Residues 110–115 (RSSLAR), Asp-128, 136–138 (VLE), Tyr-171, Lys-178, and Gln-182 contribute to the dCTP site. The Proton donor/acceptor role is filled by Glu-138. The tract at residues 169-193 (RPYNRREDAKYRNQQGAVASRIDKD) is disordered.

Belongs to the dCTP deaminase family. As to quaternary structure, homotrimer.

It catalyses the reaction dCTP + H2O + H(+) = dUTP + NH4(+). The protein operates within pyrimidine metabolism; dUMP biosynthesis; dUMP from dCTP (dUTP route): step 1/2. Its function is as follows. Catalyzes the deamination of dCTP to dUTP. In Sodalis glossinidius (strain morsitans), this protein is dCTP deaminase.